A 159-amino-acid polypeptide reads, in one-letter code: 3-hydroxyacyl-[acyl-carrier-protein] dehydratase FabZ (159 aa).

H62 is an active-site residue.

It belongs to the thioester dehydratase family. FabZ subfamily.

It is found in the cytoplasm. The enzyme catalyses a (3R)-hydroxyacyl-[ACP] = a (2E)-enoyl-[ACP] + H2O. Its function is as follows. Involved in unsaturated fatty acids biosynthesis. Catalyzes the dehydration of short chain beta-hydroxyacyl-ACPs and long chain saturated and unsaturated beta-hydroxyacyl-ACPs. The protein is 3-hydroxyacyl-[acyl-carrier-protein] dehydratase FabZ of Methylobacterium nodulans (strain LMG 21967 / CNCM I-2342 / ORS 2060).